Here is a 174-residue protein sequence, read N- to C-terminus: Ubiquinone biosynthesis accessory factor UbiT (174 aa).

The 89-residue stretch at 45-133 folds into the SCP2 domain; it reads LDDGELEFLE…LGLYVKNLMD (89 aa).

Belongs to the UbiT family.

It participates in cofactor biosynthesis; ubiquinone biosynthesis. Required for O(2)-independent ubiquinone (coenzyme Q) biosynthesis. Likely functions as an accessory factor. This chain is Ubiquinone biosynthesis accessory factor UbiT, found in Escherichia coli O157:H7.